The following is a 331-amino-acid chain: MSGENVTRVGTFILVGFPTAPGLQYLLFLLFLLTYLFVLVENLAIILTVWSSTSLHRPMYYFLSSMSFLEIWYVSDITPKMLEGFLLQQKRISFVGCMTQLYFFSSLVCTECVLLASMAYDRYVAICHPLRYHVLVTPGLCLQLVGFSFVSGFTISMIKVCFISSVTFCGSNVLNHFFCDISPILKLACTDFSTAELVDFILAFIILVFPLLATMLSYAHITLAVLRIPSATGCWRAFFTCASHLTVVTVFYTALLFMYVRPQAIDSRSSNKLISVLYTVITPILNPLIYCLRNKEFKNALKKAFGLTSCAVEGRLSSLLELHLQIHSQPL.

At 1-25 the chain is on the extracellular side; that stretch reads MSGENVTRVGTFILVGFPTAPGLQY. Residue Asn-5 is glycosylated (N-linked (GlcNAc...) asparagine). A helical membrane pass occupies residues 26 to 46; that stretch reads LLFLLFLLTYLFVLVENLAII. Residues 47 to 54 lie on the Cytoplasmic side of the membrane; sequence LTVWSSTS. Residues 55–75 form a helical membrane-spanning segment; the sequence is LHRPMYYFLSSMSFLEIWYVS. The Extracellular portion of the chain corresponds to 76-99; sequence DITPKMLEGFLLQQKRISFVGCMT. Cys-97 and Cys-189 are oxidised to a cystine. A helical transmembrane segment spans residues 100–120; it reads QLYFFSSLVCTECVLLASMAY. Topologically, residues 121 to 139 are cytoplasmic; that stretch reads DRYVAICHPLRYHVLVTPG. The helical transmembrane segment at 140–160 threads the bilayer; sequence LCLQLVGFSFVSGFTISMIKV. The Extracellular portion of the chain corresponds to 161–196; that stretch reads CFISSVTFCGSNVLNHFFCDISPILKLACTDFSTAE. A helical transmembrane segment spans residues 197–217; that stretch reads LVDFILAFIILVFPLLATMLS. Residues 218 to 237 are Cytoplasmic-facing; that stretch reads YAHITLAVLRIPSATGCWRA. A helical membrane pass occupies residues 238 to 258; the sequence is FFTCASHLTVVTVFYTALLFM. Topologically, residues 259-271 are extracellular; the sequence is YVRPQAIDSRSSN. Residues 272 to 292 traverse the membrane as a helical segment; that stretch reads KLISVLYTVITPILNPLIYCL. Over 293 to 331 the chain is Cytoplasmic; the sequence is RNKEFKNALKKAFGLTSCAVEGRLSSLLELHLQIHSQPL.

This sequence belongs to the G-protein coupled receptor 1 family.

The protein localises to the cell membrane. Odorant receptor. This Homo sapiens (Human) protein is Olfactory receptor 6B3 (OR6B3).